An 87-amino-acid chain; its full sequence is Small ribosomal subunit protein uS17 (87 aa).

The protein belongs to the universal ribosomal protein uS17 family. As to quaternary structure, part of the 30S ribosomal subunit.

Functionally, one of the primary rRNA binding proteins, it binds specifically to the 5'-end of 16S ribosomal RNA. This chain is Small ribosomal subunit protein uS17, found in Geobacillus kaustophilus (strain HTA426).